The following is a 296-amino-acid chain: Cytidine deaminase (296 aa).

CMP/dCMP-type deaminase domains are found at residues 52 to 172 (TAVE…FGPK) and 191 to 296 (THAD…YFAL). Residue 93–95 (NQE) participates in substrate binding. Residue H106 participates in Zn(2+) binding. The active-site Proton donor is the E108. Zn(2+) contacts are provided by C133 and C136.

It belongs to the cytidine and deoxycytidylate deaminase family. In terms of assembly, homodimer. Requires Zn(2+) as cofactor.

The catalysed reaction is cytidine + H2O + H(+) = uridine + NH4(+). It catalyses the reaction 2'-deoxycytidine + H2O + H(+) = 2'-deoxyuridine + NH4(+). Its function is as follows. This enzyme scavenges exogenous and endogenous cytidine and 2'-deoxycytidine for UMP synthesis. This is Cytidine deaminase from Actinobacillus succinogenes (strain ATCC 55618 / DSM 22257 / CCUG 43843 / 130Z).